A 117-amino-acid polypeptide reads, in one-letter code: Non-specific lipid-transfer protein (117 aa).

The first 26 residues, methionine 1–alanine 26, serve as a signal peptide directing secretion. 4 disulfide bridges follow: cysteine 30/cysteine 76, cysteine 40/cysteine 53, cysteine 54/cysteine 99, and cysteine 74/cysteine 113.

The protein belongs to the plant LTP family.

Plant non-specific lipid-transfer proteins transfer phospholipids as well as galactolipids across membranes. May play a role in wax or cutin deposition in the cell walls of expanding epidermal cells and certain secretory tissues. The polypeptide is Non-specific lipid-transfer protein (Spinacia oleracea (Spinach)).